Consider the following 137-residue polypeptide: Small ribosomal subunit protein uS11 (137 aa).

The tract at residues 1–25 (MADRRRGAARGGAARPRRRERKNIP) is disordered. Over residues 15–25 (RPRRRERKNIP) the composition is skewed to basic residues.

It belongs to the universal ribosomal protein uS11 family. Part of the 30S ribosomal subunit. Interacts with proteins S7 and S18. Binds to IF-3.

Its function is as follows. Located on the platform of the 30S subunit, it bridges several disparate RNA helices of the 16S rRNA. Forms part of the Shine-Dalgarno cleft in the 70S ribosome. The sequence is that of Small ribosomal subunit protein uS11 from Thermomicrobium roseum (strain ATCC 27502 / DSM 5159 / P-2).